We begin with the raw amino-acid sequence, 504 residues long: Nuclear hormone receptor family member nhr-80 (504 aa).

Positions 27–103 (STRCLICSAQ…NGMKPGGVQP (77 aa)) form a DNA-binding region, nuclear receptor. NR C4-type zinc fingers lie at residues 30–50 (CLICSAQATGFHFEAQSCSAC) and 66–86 (CITGRDDCNVHYSMHQICRSC). A compositionally biased stretch (low complexity) spans 177–192 (SSSTSFSASTTTNYST). The interval 177-199 (SSSTSFSASTTTNYSTPGPSPMA) is disordered. In terms of domain architecture, NR LBD spans 214 to 466 (EEMKLGERRR…KLVLQLLNLD (253 aa)). The tract at residues 455 to 466 (LDKLVLQLLNLD) is AF-2.

Belongs to the nuclear hormone receptor family. Interacts with nuclear hormone receptor nhr-49; the interaction is direct. As to expression, expressed in the intestine and in some head and tail neurons, as well as the ventral nerve cord.

The protein localises to the nucleus. In terms of biological role, transcription factor. Binds to regulatory elements and regulates transcription of target genes, including acyltransferase dgat-2. As part of a lysosome-to-nucleus retrograde lipid signaling pathway, acts as a direct nuclear receptor of oleoylethanolamide (OEA) and, acting in concert with nuclear hormone receptor nhr-49, activates the transcription of genes promoting longevity and mitochondrial beta-oxidation. Required to modulate expression of delta-9 fatty acid desaturases, thereby regulating lipid metabolism; in some contexts, acting in concert with nhr-49. Involved in modulation of lipid metabolism in response to the citrate-induced mitochondrial unfolded protein response (mtUPR), acting downstream of transcription factor dve-1 and ubiquitin-like protein 5. Plays a role in modulating mitochondrial morphology and function. Involved in positively modulating life-span in a germline-dependent manner, acting in concert with nuclear hormone receptor daf-12. Plays a role in transgenerational lipid accumulation in response to a high-fat diet. This chain is Nuclear hormone receptor family member nhr-80, found in Caenorhabditis elegans.